The following is a 386-amino-acid chain: Agamous-like MADS-box protein AGL103 (386 aa).

The region spanning serine 29–arginine 76 is the MADS-box domain.

As to quaternary structure, interacts with MEE14/CBP1.

The protein resides in the nucleus. Functionally, probable transcription factor that may function in the maintenance of the proper function of the central cell in pollen tube attraction. The chain is Agamous-like MADS-box protein AGL103 from Arabidopsis thaliana (Mouse-ear cress).